Reading from the N-terminus, the 208-residue chain is T-cell surface glycoprotein CD8 beta chain (208 aa).

Residues 1-21 form the signal peptide; it reads MQPWLWLVFSVKLSALWGSSA. Residues 22 to 131 form the Ig-like V-type domain; the sequence is LLQTPSSLLV…MVVFGTGTKL (110 aa). The Extracellular segment spans residues 22-168; the sequence is LLQTPSSLLV…KTQKGLTCGL (147 aa). 3 N-linked (GlcNAc...) asparagine glycosylation sites follow: N34, N88, and N94. C41 and C115 are disulfide-bonded. A helical membrane pass occupies residues 169-189; sequence ITLSLLVACILVLLVSLSVAI. The Cytoplasmic segment spans residues 190-208; it reads HFHCMRRRARIHFMKQFHK.

Forms disulfide-linked heterodimers with CD8A at the cell surface. Interacts with CD3D; this interaction couples TCR-CD3 with CD8. Interacts with LCK. Phosphorylated as a consequence of T-cell activation. Post-translationally, palmitoylated at the cytoplasmic tail and thereby targets the heterodimer CD8A/CD8B to lipid rafts unlike CD8A homodimers.

The protein resides in the cell membrane. In terms of biological role, integral membrane glycoprotein that plays an essential role in the immune response and serves multiple functions in responses against both external and internal offenses. In T-cells, functions primarily as a coreceptor for MHC class I molecule:peptide complex. The antigens presented by class I peptides are derived from cytosolic proteins while class II derived from extracellular proteins. Interacts simultaneously with the T-cell receptor (TCR) and the MHC class I proteins presented by antigen presenting cells (APCs). In turn, recruits the Src kinase LCK to the vicinity of the TCR-CD3 complex. A palmitoylation site in the cytoplasmic tail of CD8B chain contributes to partitioning of CD8 into the plasma membrane lipid rafts where signaling proteins are enriched. Once LCK recruited, it initiates different intracellular signaling pathways by phosphorylating various substrates ultimately leading to lymphokine production, motility, adhesion and activation of cytotoxic T-lymphocytes (CTLs). Additionally, plays a critical role in thymic selection of CD8+ T-cells. The chain is T-cell surface glycoprotein CD8 beta chain (Cd8b) from Rattus norvegicus (Rat).